Reading from the N-terminus, the 535-residue chain is Estrogen receptor (535 aa).

A disordered region spans residues 1–21; it reads SRMLTDPPRIGSMQSLGSSPT. Residues 1-104 are modulating; the sequence is SRMLTDPPRI…VFEMANETRY (104 aa). The span at 12–21 shows a compositional bias: polar residues; it reads SMQSLGSSPT. NR C4-type zinc fingers lie at residues 105 to 125 and 141 to 165; these read CAVC…CEGC and CPAT…LRKC. The segment at residues 105 to 170 is a DNA-binding region (nuclear receptor); sequence CAVCSDFASG…RLRKCYEVGM (66 aa). Residues 171-236 form a hinge region; that stretch reads VKGGLRKDRG…GGWCGPRITM (66 aa). The interval 187 to 229 is disordered; the sequence is DKRYCGPAGDREKPYGDLEHRTAPPQDGGRNSSSSSLSGGGGW. Residues 195-208 show a composition bias toward basic and acidic residues; it reads GDREKPYGDLEHRT. The span at 214–223 shows a compositional bias: low complexity; sequence GGRNSSSSSL. The NR LBD domain maps to 237–473; the sequence is PPEQVLFLLQ…DLLLEMLDGH (237 aa). The segment at 478–535 is disordered; sequence PGKVAQAGEQTEGPSTTTTTSTGSSIGPMRGSQDTHIRSPGSGVLQYGSPSSDQMPIP. The span at 492–502 shows a compositional bias: low complexity; that stretch reads STTTTTSTGSS. Polar residues predominate over residues 525–535; that stretch reads GSPSSDQMPIP.

It belongs to the nuclear hormone receptor family. NR3 subfamily. Binds DNA as a homodimer. Can form a heterodimer with ER-beta. In terms of tissue distribution, highest expression in brain and liver.

The protein localises to the nucleus. The steroid hormones and their receptors are involved in the regulation of eukaryotic gene expression and affect cellular proliferation and differentiation in target tissues. The protein is Estrogen receptor (esr1) of Salmo salar (Atlantic salmon).